Here is a 270-residue protein sequence, read N- to C-terminus: Ethanolamine ammonia-lyase small subunit (270 aa).

3 residues coordinate adenosylcob(III)alamin: Val166, Glu187, and Cys216.

Belongs to the EutC family. As to quaternary structure, the basic unit is a heterodimer which dimerizes to form tetramers. The heterotetramers trimerize; 6 large subunits form a core ring with 6 small subunits projecting outwards. Adenosylcob(III)alamin serves as cofactor.

The protein localises to the bacterial microcompartment. The enzyme catalyses ethanolamine = acetaldehyde + NH4(+). The protein operates within amine and polyamine degradation; ethanolamine degradation. In terms of biological role, catalyzes the deamination of various vicinal amino-alcohols to oxo compounds. Allows this organism to utilize ethanolamine as the sole source of nitrogen and carbon in the presence of external vitamin B12. This chain is Ethanolamine ammonia-lyase small subunit, found in Ralstonia nicotianae (strain ATCC BAA-1114 / GMI1000) (Ralstonia solanacearum).